A 180-amino-acid chain; its full sequence is UPF0227 protein YcfP (180 aa).

This sequence belongs to the UPF0227 family.

The protein is UPF0227 protein YcfP of Escherichia coli O139:H28 (strain E24377A / ETEC).